The chain runs to 922 residues: Translation initiation factor IF-2 (922 aa).

Positions 243–329 (AAREAAKLAE…GKSKSGQEET (87 aa)) are disordered. Low complexity predominate over residues 250 to 264 (LAEAQKAAAPAPAAP). A compositionally biased stretch (basic and acidic residues) spans 267-298 (KTLHKPDKPAAAKGAKGPDKKPAGAWKDDAAR). One can recognise a tr-type G domain in the interval 422–589 (ARPPVVTVMG…AILLQAEVLE (168 aa)). The G1 stretch occupies residues 431–438 (GHVDHGKT). 431-438 (GHVDHGKT) contributes to the GTP binding site. The G2 stretch occupies residues 456–460 (GITQH). The interval 477-480 (DTPG) is G3. Residues 477-481 (DTPGH) and 531-534 (NKID) contribute to the GTP site. The G4 stretch occupies residues 531 to 534 (NKID). A G5 region spans residues 567–569 (SAK).

The protein belongs to the TRAFAC class translation factor GTPase superfamily. Classic translation factor GTPase family. IF-2 subfamily.

The protein localises to the cytoplasm. Functionally, one of the essential components for the initiation of protein synthesis. Protects formylmethionyl-tRNA from spontaneous hydrolysis and promotes its binding to the 30S ribosomal subunits. Also involved in the hydrolysis of GTP during the formation of the 70S ribosomal complex. This chain is Translation initiation factor IF-2, found in Thiobacillus denitrificans (strain ATCC 25259 / T1).